A 227-amino-acid chain; its full sequence is Ribose-5-phosphate isomerase A (227 aa).

Substrate contacts are provided by residues 26-29, 82-85, and 95-98; these read TGST, DGAD, and KGGG. Glu-104 (proton acceptor) is an active-site residue. Lys-122 is a binding site for substrate.

Belongs to the ribose 5-phosphate isomerase family. In terms of assembly, homodimer.

It carries out the reaction aldehydo-D-ribose 5-phosphate = D-ribulose 5-phosphate. It functions in the pathway carbohydrate degradation; pentose phosphate pathway; D-ribose 5-phosphate from D-ribulose 5-phosphate (non-oxidative stage): step 1/1. Functionally, catalyzes the reversible conversion of ribose-5-phosphate to ribulose 5-phosphate. The sequence is that of Ribose-5-phosphate isomerase A from Streptococcus pyogenes serotype M5 (strain Manfredo).